A 578-amino-acid chain; its full sequence is Isocitrate dehydrogenase kinase/phosphatase (578 aa).

ATP is bound by residues 315–321 and K336; that span reads APGIRGM. Residue D371 is part of the active site.

Belongs to the AceK family.

The protein localises to the cytoplasm. The enzyme catalyses L-seryl-[isocitrate dehydrogenase] + ATP = O-phospho-L-seryl-[isocitrate dehydrogenase] + ADP + H(+). In terms of biological role, bifunctional enzyme which can phosphorylate or dephosphorylate isocitrate dehydrogenase (IDH) on a specific serine residue. This is a regulatory mechanism which enables bacteria to bypass the Krebs cycle via the glyoxylate shunt in response to the source of carbon. When bacteria are grown on glucose, IDH is fully active and unphosphorylated, but when grown on acetate or ethanol, the activity of IDH declines drastically concomitant with its phosphorylation. In Escherichia coli (strain ATCC 8739 / DSM 1576 / NBRC 3972 / NCIMB 8545 / WDCM 00012 / Crooks), this protein is Isocitrate dehydrogenase kinase/phosphatase.